A 273-amino-acid polypeptide reads, in one-letter code: uncharacterized protein (273 aa).

This is an uncharacterized protein from Mycobacterium bovis (strain ATCC BAA-935 / AF2122/97).